Consider the following 181-residue polypeptide: Ribonuclease HII (181 aa).

The RNase H type-2 domain occupies 1 to 181 (MICGIDEVGR…SLHRKSFQLI (181 aa)). Residues Asp-6, Glu-7, and Asp-98 each contribute to the a divalent metal cation site.

It belongs to the RNase HII family. It depends on Mn(2+) as a cofactor. Mg(2+) is required as a cofactor.

The protein localises to the cytoplasm. It carries out the reaction Endonucleolytic cleavage to 5'-phosphomonoester.. In terms of biological role, endonuclease that specifically degrades the RNA of RNA-DNA hybrids. The protein is Ribonuclease HII of Borrelia duttonii (strain Ly).